Reading from the N-terminus, the 136-residue chain is Large ribosomal subunit protein uL16 (136 aa).

It belongs to the universal ribosomal protein uL16 family. As to quaternary structure, part of the 50S ribosomal subunit.

Its function is as follows. Binds 23S rRNA and is also seen to make contacts with the A and possibly P site tRNAs. This Actinobacillus succinogenes (strain ATCC 55618 / DSM 22257 / CCUG 43843 / 130Z) protein is Large ribosomal subunit protein uL16.